The sequence spans 246 residues: Probable transcriptional regulatory protein Dshi_2762 (246 aa).

This sequence belongs to the TACO1 family.

The protein resides in the cytoplasm. The protein is Probable transcriptional regulatory protein Dshi_2762 of Dinoroseobacter shibae (strain DSM 16493 / NCIMB 14021 / DFL 12).